A 206-amino-acid polypeptide reads, in one-letter code: tRNA(Phe) 7-((3-amino-3-carboxypropyl)-4-demethylwyosine(37)-N(4))-methyltransferase 2 (206 aa).

The protein belongs to the TYW3 family.

It carries out the reaction 4-demethyl-7-[(3S)-3-amino-3-carboxypropyl]wyosine(37) in tRNA(Phe) + S-adenosyl-L-methionine = 7-[(3S)-3-amino-3-carboxypropyl]wyosine(37) in tRNA(Phe) + S-adenosyl-L-homocysteine + H(+). In terms of biological role, S-adenosyl-L-methionine-dependent methyltransferase that acts as a component of the wyosine derivatives biosynthesis pathway. Probably methylates N-4 position of wybutosine-86 to produce wybutosine-72. This is tRNA(Phe) 7-((3-amino-3-carboxypropyl)-4-demethylwyosine(37)-N(4))-methyltransferase 2 from Pyrococcus furiosus (strain ATCC 43587 / DSM 3638 / JCM 8422 / Vc1).